Here is a 476-residue protein sequence, read N- to C-terminus: Protein THYLAKOID RHODANESE-LIKE, chloroplastic (476 aa).

Residues 1-21 (MAATTTILSSAAPTPLTAPPR) constitute a chloroplast transit peptide. The tract at residues 1–29 (MAATTTILSSAAPTPLTAPPRARARAPAA) is disordered. Low complexity predominate over residues 11–21 (AAPTPLTAPPR). The transit peptide at 22 to 58 (ARARAPAARRRRLRARDILGAALGLANGGASAALAAP) directs the protein to the thylakoid. The helical transmembrane segment at 100–120 (LVAAAGVAAVALPLVLAQVLG) threads the bilayer. In terms of domain architecture, Rhodanese spans 140–246 (EEPGAQLVDI…WLSSSLPWTA (107 aa)). The next 2 helical transmembrane spans lie at 264–284 (LPVT…YTEI) and 287–307 (VLQF…LIYA). The segment at 342–476 (LPSTGTKSQP…PPSSPSPSAP (135 aa)) is disordered. Residues 351 to 389 (PAITEAAPATAEAAPAAATATAAPPAAPVEETSTEAAPA) are compositionally biased toward low complexity. Residues 403–412 (LKPPSSPSPL) show a composition bias toward pro residues. The span at 425-446 (ESAATESAPAVNSAPVAEAAPE) shows a compositional bias: low complexity. Over residues 447-476 (AAPPAAPRPLSPYPNYPDLKPPSSPSPSAP) the composition is skewed to pro residues.

Component of high molecular weight thylakoid LFNRs-containing protein complexes containing LIR1, LFNR1, LFNR2, TIC62 and TROL proteins.

It localises to the plastid. The protein localises to the chloroplast thylakoid membrane. In terms of biological role, rhodanese domain-containing protein required for anchoring ferredoxin--NADP reductase to the thylakoid membranes and sustaining efficient linear electron flow (LEF). The protein is Protein THYLAKOID RHODANESE-LIKE, chloroplastic of Oryza sativa subsp. indica (Rice).